Here is a 461-residue protein sequence, read N- to C-terminus: Serine/threonine-protein kinase 4 homolog A (461 aa).

In terms of domain architecture, Protein kinase spans 20 to 273; the sequence is FTIVEKLGEG…AEELLKHPFI (254 aa). Residues 26-34 and lysine 49 contribute to the ATP site; that span reads LGEGSYGSV. The active-site Proton acceptor is aspartate 139. Threonine 173 is subject to Phosphothreonine; by autocatalysis. 2 disordered regions span residues 303-349 and 369-388; these read GIEQ…EEYD and NDDE…SNKK. Over residues 307–322 the composition is skewed to acidic residues; it reads RDEEEEDEDEDSEDSD. The region spanning 411–458 is the SARAH domain; it reads SDKYSSYSLEELKKMLAELEIEREKEVQKTLEKFSINRQALLAVIDEK.

Belongs to the protein kinase superfamily. STE Ser/Thr protein kinase family. STE20 subfamily. The cofactor is Mn(2+). Undergoes autophosphorylation in the catalytic domain.

The protein localises to the cytoplasm. The protein resides in the cytosol. The catalysed reaction is L-seryl-[protein] + ATP = O-phospho-L-seryl-[protein] + ADP + H(+). It carries out the reaction L-threonyl-[protein] + ATP = O-phospho-L-threonyl-[protein] + ADP + H(+). Regulates both cAMP signaling during early development and the stress response. Functions as an activator of adenylylcyclase. This Dictyostelium discoideum (Social amoeba) protein is Serine/threonine-protein kinase 4 homolog A (krsA).